A 175-amino-acid polypeptide reads, in one-letter code: Large ribosomal subunit protein uL10 (175 aa).

The protein belongs to the universal ribosomal protein uL10 family. As to quaternary structure, part of the ribosomal stalk of the 50S ribosomal subunit. The N-terminus interacts with L11 and the large rRNA to form the base of the stalk. The C-terminus forms an elongated spine to which L12 dimers bind in a sequential fashion forming a multimeric L10(L12)X complex.

Its function is as follows. Forms part of the ribosomal stalk, playing a central role in the interaction of the ribosome with GTP-bound translation factors. The sequence is that of Large ribosomal subunit protein uL10 from Methylococcus capsulatus (strain ATCC 33009 / NCIMB 11132 / Bath).